Consider the following 932-residue polypeptide: Protein translocase subunit SecA (932 aa).

ATP-binding positions include Gln-87, 105 to 109 (GEGKT), and Asp-515. Residues Cys-916, Cys-918, Cys-927, and His-928 each contribute to the Zn(2+) site.

Belongs to the SecA family. In terms of assembly, monomer and homodimer. Part of the essential Sec protein translocation apparatus which comprises SecA, SecYEG and auxiliary proteins SecDF-YajC and YidC. It depends on Zn(2+) as a cofactor.

Its subcellular location is the cell inner membrane. It localises to the cytoplasm. It catalyses the reaction ATP + H2O + cellular proteinSide 1 = ADP + phosphate + cellular proteinSide 2.. Its function is as follows. Part of the Sec protein translocase complex. Interacts with the SecYEG preprotein conducting channel. Has a central role in coupling the hydrolysis of ATP to the transfer of proteins into and across the cell membrane, serving both as a receptor for the preprotein-SecB complex and as an ATP-driven molecular motor driving the stepwise translocation of polypeptide chains across the membrane. The chain is Protein translocase subunit SecA from Burkholderia lata (strain ATCC 17760 / DSM 23089 / LMG 22485 / NCIMB 9086 / R18194 / 383).